The following is a 178-amino-acid chain: uncharacterized protein (178 aa).

This is an uncharacterized protein from Acanthamoeba polyphaga mimivirus (APMV).